We begin with the raw amino-acid sequence, 240 residues long: Type II restriction enzyme DdeI (240 aa).

It carries out the reaction Endonucleolytic cleavage of DNA to give specific double-stranded fragments with terminal 5'-phosphates.. Functionally, a P subtype restriction enzyme that recognizes the double-stranded sequence 5'-CTNAG-3' and cleaves after C-1. The sequence is that of Type II restriction enzyme DdeI (ddeIR) from Desulfomicrobium norvegicum (strain DSM 1741 / NCIMB 8310) (Desulfovibrio baculatus (strain Norway 4)).